The primary structure comprises 201 residues: Large ribosomal subunit protein uL4 (201 aa).

Positions 43–66 are disordered; the sequence is TRAQKTRSEVSGGGKKPWRQKGTG.

This sequence belongs to the universal ribosomal protein uL4 family. Part of the 50S ribosomal subunit.

In terms of biological role, one of the primary rRNA binding proteins, this protein initially binds near the 5'-end of the 23S rRNA. It is important during the early stages of 50S assembly. It makes multiple contacts with different domains of the 23S rRNA in the assembled 50S subunit and ribosome. Forms part of the polypeptide exit tunnel. The polypeptide is Large ribosomal subunit protein uL4 (Tolumonas auensis (strain DSM 9187 / NBRC 110442 / TA 4)).